A 60-amino-acid polypeptide reads, in one-letter code: uncharacterized protein (60 aa).

This is an uncharacterized protein from Bacillus subtilis (strain 168).